Consider the following 167-residue polypeptide: V-type proton ATPase subunit c' (167 aa).

The Lumenal portion of the chain corresponds to 1–13; sequence MAEIMADSELAPK. The chain crosses the membrane as a helical span at residues 14-34; that stretch reads FAPFIGMAGIAAAMIFGSAGA. Topologically, residues 35–59 are cytoplasmic; sequence AYGTAKSGIGIAGVGTFRPDLIMKC. The chain crosses the membrane as a helical span at residues 60–80; sequence LIPVVMSGIIAVYALVVAVLI. Residues 81 to 101 are Lumenal-facing; it reads AQDLGPPGSGQHYSLFNGFMH. The chain crosses the membrane as a helical span at residues 102–122; sequence LACGLSVGLTGLAAGYCIGIV. Over 123 to 140 the chain is Cytoplasmic; the sequence is GDKGVRSFMLQSRIFVGM. The chain crosses the membrane as a helical span at residues 141 to 161; the sequence is VLILIFGEVLGLYGLIVALIL. Residues 162–167 lie on the Lumenal side of the membrane; the sequence is NTKSKG.

The protein belongs to the V-ATPase proteolipid subunit family. As to quaternary structure, V-ATPase is a heteromultimeric enzyme composed of a peripheral catalytic V1 complex (components A to H) attached to an integral membrane V0 proton pore complex (components: a, c, c', c'', d, e, f and VOA1). The decameric c-ring forms the proton-conducting pore, and is composed of eight proteolipid subunits c, one subunit c' and one subunit c''.

The protein localises to the vacuole membrane. Proton-conducting pore forming subunit of the V0 complex of vacuolar(H+)-ATPase (V-ATPase), a multisubunit enzyme composed of a peripheral complex (V1) that hydrolyzes ATP and a membrane integral complex (V0) that translocates protons. V-ATPase is responsible for acidifying and maintaining the pH of intracellular compartments. This chain is V-type proton ATPase subunit c' (vma-11), found in Neurospora crassa (strain ATCC 24698 / 74-OR23-1A / CBS 708.71 / DSM 1257 / FGSC 987).